The sequence spans 361 residues: Putative dual-specificity RNA methyltransferase RlmN (361 aa).

The Proton acceptor role is filled by Glu91. Residues 97-329 (QHYGLSVCVT…KKKGVNCVVR (233 aa)) enclose the Radical SAM core domain. [4Fe-4S] cluster-binding residues include Cys111, Cys115, and Cys118. S-adenosyl-L-methionine-binding positions include 163-164 (GE), Ser195, 218-220 (SLH), and Thr296.

Belongs to the radical SAM superfamily. RlmN family. It depends on [4Fe-4S] cluster as a cofactor.

It is found in the cytoplasm. The enzyme catalyses adenosine(2503) in 23S rRNA + 2 reduced [2Fe-2S]-[ferredoxin] + 2 S-adenosyl-L-methionine = 2-methyladenosine(2503) in 23S rRNA + 5'-deoxyadenosine + L-methionine + 2 oxidized [2Fe-2S]-[ferredoxin] + S-adenosyl-L-homocysteine. The catalysed reaction is adenosine(37) in tRNA + 2 reduced [2Fe-2S]-[ferredoxin] + 2 S-adenosyl-L-methionine = 2-methyladenosine(37) in tRNA + 5'-deoxyadenosine + L-methionine + 2 oxidized [2Fe-2S]-[ferredoxin] + S-adenosyl-L-homocysteine. In terms of biological role, specifically methylates position 2 of adenine 2503 in 23S rRNA and position 2 of adenine 37 in tRNAs. The chain is Putative dual-specificity RNA methyltransferase RlmN from Streptococcus pneumoniae (strain CGSP14).